The sequence spans 157 residues: Transcription initiation factor IIA large subunit (157 aa).

The protein belongs to the TFIIA subunit 1 family. In terms of assembly, TFIIA is a heterodimer of the large subunit and the small subunit gamma.

It localises to the nucleus. In terms of biological role, TFIIA is a component of the transcription machinery of RNA polymerase II and plays an important role in transcriptional activation. The sequence is that of Transcription initiation factor IIA large subunit (TOA1) from Encephalitozoon cuniculi (strain GB-M1) (Microsporidian parasite).